Consider the following 468-residue polypeptide: MMIPIAIRWQGKKYDLEIEPNETGSTLKHQLYSLTQVPPERQKVIVKGGQLKDDVLLGSVGIKPNATLLMMGTAGELPTAMPIPAVESVEQEESEDDGYPSGLINLGNTCYMNSTVQMLRAIPELSDAVSQFNSSGGLVAEYRTLLNSMQSNAPVTPMRFLQSLRMEYPQFAEMSRETGGYAQQDAEECWSFLLSVLQRSLSSEWVQKNMAGKLLSTMKCDENEVQEQPSISHDTFLSLPCHISMHTSYMTQGILEGLTQKISKHSDVLNRDAMYSKISRISRLPNYLTVNFVRFYWKASIGKKAKILRKVKFPFELDAVEFCTPELSQKLIPVRDKLREIEKNDEEHERAAKRIKIQPSEDEKEAEAECRLTQVATCQSLVDPELADDEGANPTGLYDLVGVLSHAGASASSGHYQAWIRNSNNRAEWFRFNDAKVSIVPAEKIETLDGGGEADSAYILLYKAKDIA.

One can recognise a Ubiquitin-like domain in the interval 1 to 71 (MMIPIAIRWQ…IKPNATLLMM (71 aa)). Residues 101 to 465 (SGLINLGNTC…SAYILLYKAK (365 aa)) enclose the USP domain. Cys-110 acts as the Nucleophile in catalysis. His-415 serves as the catalytic Proton acceptor.

The protein belongs to the peptidase C19 family. USP14/UBP6 subfamily. As to quaternary structure, component of the 26S proteasome. Interacts with rpn1.

The protein localises to the nucleus. It catalyses the reaction Thiol-dependent hydrolysis of ester, thioester, amide, peptide and isopeptide bonds formed by the C-terminal Gly of ubiquitin (a 76-residue protein attached to proteins as an intracellular targeting signal).. Functionally, ubiquitin-protein hydrolase is involved both in the processing of ubiquitin precursors and of ubiquitinated proteins. This enzyme is a thiol protease that recognizes and hydrolyzes a peptide bond at the C-terminal glycine of ubiquitin. In Schizosaccharomyces pombe (strain 972 / ATCC 24843) (Fission yeast), this protein is Ubiquitin carboxyl-terminal hydrolase 6 (ubp6).